Consider the following 337-residue polypeptide: RNA 3'-terminal phosphate cyclase (337 aa).

ATP-binding positions include Gln100 and 281-285; that span reads YMGDQ. Residue His306 is the Tele-AMP-histidine intermediate of the active site.

The protein belongs to the RNA 3'-terminal cyclase family. Type 1 subfamily.

The protein localises to the cytoplasm. The catalysed reaction is a 3'-end 3'-phospho-ribonucleotide-RNA + ATP = a 3'-end 2',3'-cyclophospho-ribonucleotide-RNA + AMP + diphosphate. In terms of biological role, catalyzes the conversion of 3'-phosphate to a 2',3'-cyclic phosphodiester at the end of RNA. The mechanism of action of the enzyme occurs in 3 steps: (A) adenylation of the enzyme by ATP; (B) transfer of adenylate to an RNA-N3'P to produce RNA-N3'PP5'A; (C) and attack of the adjacent 2'-hydroxyl on the 3'-phosphorus in the diester linkage to produce the cyclic end product. The biological role of this enzyme is unknown but it is likely to function in some aspects of cellular RNA processing. The sequence is that of RNA 3'-terminal phosphate cyclase (rtcA) from Methanothermobacter thermautotrophicus (strain ATCC 29096 / DSM 1053 / JCM 10044 / NBRC 100330 / Delta H) (Methanobacterium thermoautotrophicum).